Consider the following 371-residue polypeptide: DNA replication and repair protein RecF (371 aa).

30 to 37 is an ATP binding site; it reads GENAQGKT.

It belongs to the RecF family.

Its subcellular location is the cytoplasm. Its function is as follows. The RecF protein is involved in DNA metabolism; it is required for DNA replication and normal SOS inducibility. RecF binds preferentially to single-stranded, linear DNA. It also seems to bind ATP. The chain is DNA replication and repair protein RecF from Staphylococcus epidermidis (strain ATCC 35984 / DSM 28319 / BCRC 17069 / CCUG 31568 / BM 3577 / RP62A).